We begin with the raw amino-acid sequence, 325 residues long: Glutarate 2-hydroxylase (325 aa).

Positions 160, 162, and 292 each coordinate Fe cation.

Belongs to the glutarate hydroxylase family. Homotetramer. Fe(2+) serves as cofactor.

It carries out the reaction glutarate + 2-oxoglutarate + O2 = (S)-2-hydroxyglutarate + succinate + CO2. Its pathway is amino-acid degradation. Its function is as follows. Acts as an alpha-ketoglutarate-dependent dioxygenase catalyzing hydroxylation of glutarate (GA) to L-2-hydroxyglutarate (L2HG). Functions in a L-lysine degradation pathway that proceeds via cadaverine, glutarate and L-2-hydroxyglutarate. The polypeptide is Glutarate 2-hydroxylase (Salmonella newport (strain SL254)).